Reading from the N-terminus, the 276-residue chain is MLTDQSKRDALLNTHIHPTAVIHPKAELHPTVTVGPYAVIGENVKIGAQTTIGAHAVIEGPIEIGIGNRIFPSAVIGLEPQDLKYKGAASWVKIGDYNTIREFVTINRATHADEVTEIGSHNLLMAYVHVAHNCVIEDHVIIANAVALAGHVHIESRAVIGGALGVHQFVRIGRNAMLGGMSRIDRDAPPYMAVEGNPSRVRALNLIGLKRAGLTAEDLSSLKKAFRLLYRSQLTFKEALEELQALSNNQYVEYLYQFLQASTTGEKRRGPIPGKN.

It belongs to the transferase hexapeptide repeat family. LpxA subfamily. Homotrimer.

The protein localises to the cytoplasm. The catalysed reaction is a (3R)-hydroxyacyl-[ACP] + UDP-N-acetyl-alpha-D-glucosamine = a UDP-3-O-[(3R)-3-hydroxyacyl]-N-acetyl-alpha-D-glucosamine + holo-[ACP]. The protein operates within glycolipid biosynthesis; lipid IV(A) biosynthesis; lipid IV(A) from (3R)-3-hydroxytetradecanoyl-[acyl-carrier-protein] and UDP-N-acetyl-alpha-D-glucosamine: step 1/6. Involved in the biosynthesis of lipid A, a phosphorylated glycolipid that anchors the lipopolysaccharide to the outer membrane of the cell. This is Acyl-[acyl-carrier-protein]--UDP-N-acetylglucosamine O-acyltransferase from Rippkaea orientalis (strain PCC 8801 / RF-1) (Cyanothece sp. (strain PCC 8801)).